A 289-amino-acid polypeptide reads, in one-letter code: 4-diphosphocytidyl-2-C-methyl-D-erythritol kinase (289 aa).

Lys-11 is a catalytic residue. Residue Pro-93–Ala-103 coordinates ATP. Asp-135 is an active-site residue.

Belongs to the GHMP kinase family. IspE subfamily.

The catalysed reaction is 4-CDP-2-C-methyl-D-erythritol + ATP = 4-CDP-2-C-methyl-D-erythritol 2-phosphate + ADP + H(+). It functions in the pathway isoprenoid biosynthesis; isopentenyl diphosphate biosynthesis via DXP pathway; isopentenyl diphosphate from 1-deoxy-D-xylulose 5-phosphate: step 3/6. In terms of biological role, catalyzes the phosphorylation of the position 2 hydroxy group of 4-diphosphocytidyl-2C-methyl-D-erythritol. This is 4-diphosphocytidyl-2-C-methyl-D-erythritol kinase from Thermoanaerobacter pseudethanolicus (strain ATCC 33223 / 39E) (Clostridium thermohydrosulfuricum).